A 379-amino-acid chain; its full sequence is Alcohol dehydrogenase 2 (379 aa).

Cysteine 48 serves as a coordination point for Zn(2+). 49–53 (HTDML) serves as a coordination point for NAD(+). Zn(2+)-binding residues include histidine 69, cysteine 100, cysteine 103, cysteine 106, cysteine 114, and cysteine 178. NAD(+)-binding positions include 203–208 (GLGAVG), aspartate 227, lysine 232, 275–277 (TGI), 298–300 (IGA), and 321–323 (TTF).

It belongs to the zinc-containing alcohol dehydrogenase family. Class-IV subfamily. As to quaternary structure, homodimer. Requires Zn(2+) as cofactor. Expressed in flowers and disk florets.

It carries out the reaction (R,R)-chrysanthemol + NAD(+) = (1R,3R)-chrysanthemal + NADH + H(+). The enzyme catalyses nerol + NAD(+) = neral + NADH + H(+). The catalysed reaction is (S)-(-)-citronellol + NAD(+) = (S)-(-)-citronellal + NADH + H(+). It catalyses the reaction perillyl alcohol + NAD(+) = perillyl aldehyde + NADH + H(+). It carries out the reaction (6E)-8-hydroxygeraniol + NAD(+) = (6E)-8-hydroxygeranial + NADH + H(+). The enzyme catalyses (2E)-geraniol + NAD(+) = (2E)-geranial + NADH + H(+). The protein operates within isoprenoid biosynthesis. Functionally, component of the monoterpenoid pyrethrins biosynthesis; pyrethrins are widely used plant-derived pesticide. Mediates the conversion of trans-chrysanthemol into trans-chrysanthemal. This is Alcohol dehydrogenase 2 from Tanacetum cinerariifolium (Dalmatian daisy).